The following is a 106-amino-acid chain: Large ribosomal subunit protein uL24 (106 aa).

This sequence belongs to the universal ribosomal protein uL24 family. In terms of assembly, part of the 50S ribosomal subunit.

One of two assembly initiator proteins, it binds directly to the 5'-end of the 23S rRNA, where it nucleates assembly of the 50S subunit. Functionally, one of the proteins that surrounds the polypeptide exit tunnel on the outside of the subunit. The chain is Large ribosomal subunit protein uL24 from Thermosipho melanesiensis (strain DSM 12029 / CIP 104789 / BI429).